The following is a 153-amino-acid chain: Probable succinate transporter subunit YjjB (153 aa).

4 helical membrane-spanning segments follow: residues 7–27, 51–71, 83–103, and 125–145; these read WALL…AMVF, MIHF…MIGI, VFTV…TAMI, and FLKA…PGLW.

The protein belongs to the ThrE exporter (TC 2.A.79) family. In terms of assembly, the transporter is composed of YjjB and YjjP.

The protein resides in the cell inner membrane. In terms of biological role, involved in succinate export with YjjP. Both proteins are required for export. In Yersinia pestis bv. Antiqua (strain Antiqua), this protein is Probable succinate transporter subunit YjjB.